The primary structure comprises 130 residues: Flagellar assembly factor FliW (130 aa).

It belongs to the FliW family. As to quaternary structure, interacts with translational regulator CsrA and flagellin(s).

Its subcellular location is the cytoplasm. In terms of biological role, acts as an anti-CsrA protein, binds CsrA and prevents it from repressing translation of its target genes, one of which is flagellin. Binds to flagellin and participates in the assembly of the flagellum. The sequence is that of Flagellar assembly factor FliW from Clostridioides difficile (strain 630) (Peptoclostridium difficile).